The primary structure comprises 257 residues: Alkaline phosphatase synthesis transcriptional regulatory protein SphR (257 aa).

One can recognise a Response regulatory domain in the interval 25-148; it reads RILVVEDEAV…ELVARCRALL (124 aa). Residue D83 is modified to 4-aspartylphosphate. The segment at residues 159-257 is a DNA-binding region (ompR/PhoB-type); that stretch reads PAVLRYEGLK…TVRGFGYRLG (99 aa).

In terms of processing, phosphorylated by SphS.

In terms of biological role, member of the two-component regulatory system SphR/SphS. Response regulator. Involved in inducible production of alkaline phosphatase in response to phosphate limitation as it is directly involved in the regulation of phoA transcription in response to phosphate limitation. Binds to two distinct sites upstream from the phoA promoter. This Synechococcus elongatus (strain ATCC 33912 / PCC 7942 / FACHB-805) (Anacystis nidulans R2) protein is Alkaline phosphatase synthesis transcriptional regulatory protein SphR (sphR).